We begin with the raw amino-acid sequence, 84 residues long: UPF0473 protein CPF_2030 (84 aa).

Belongs to the UPF0473 family.

The protein is UPF0473 protein CPF_2030 of Clostridium perfringens (strain ATCC 13124 / DSM 756 / JCM 1290 / NCIMB 6125 / NCTC 8237 / Type A).